Here is a 499-residue protein sequence, read N- to C-terminus: Bifunctional purine biosynthesis protein PurH (499 aa).

Residues 1 to 144 enclose the MGS-like domain; that stretch reads MIKRALISVF…KNFQDVVVLT (144 aa).

This sequence belongs to the PurH family.

The enzyme catalyses (6R)-10-formyltetrahydrofolate + 5-amino-1-(5-phospho-beta-D-ribosyl)imidazole-4-carboxamide = 5-formamido-1-(5-phospho-D-ribosyl)imidazole-4-carboxamide + (6S)-5,6,7,8-tetrahydrofolate. It catalyses the reaction IMP + H2O = 5-formamido-1-(5-phospho-D-ribosyl)imidazole-4-carboxamide. It functions in the pathway purine metabolism; IMP biosynthesis via de novo pathway; 5-formamido-1-(5-phospho-D-ribosyl)imidazole-4-carboxamide from 5-amino-1-(5-phospho-D-ribosyl)imidazole-4-carboxamide (10-formyl THF route): step 1/1. It participates in purine metabolism; IMP biosynthesis via de novo pathway; IMP from 5-formamido-1-(5-phospho-D-ribosyl)imidazole-4-carboxamide: step 1/1. The protein is Bifunctional purine biosynthesis protein PurH of Clostridium acetobutylicum (strain ATCC 824 / DSM 792 / JCM 1419 / IAM 19013 / LMG 5710 / NBRC 13948 / NRRL B-527 / VKM B-1787 / 2291 / W).